Consider the following 76-residue polypeptide: Conotoxin VnMKLT2-013 (76 aa).

The signal sequence occupies residues 1–23 (MMKLTCVLIIAVLFLTACQLTTA). The propeptide occupies 24–42 (ETRDEYRAVRSSDEVQNSR). Residues 29-49 (YRAVRSSDEVQNSRSTDDCST) are disordered. Cystine bridges form between cysteine 47-cysteine 58, cysteine 52-cysteine 63, and cysteine 57-cysteine 72.

It belongs to the conotoxin O1 superfamily. Expressed by the venom duct.

The protein resides in the secreted. The sequence is that of Conotoxin VnMKLT2-013 from Conus ventricosus (Mediterranean cone).